The primary structure comprises 188 residues: CASP-like protein 4B3 (188 aa).

Positions 1-21 (MSFSPASSEPHDAPAAAGSSV) are disordered. Topologically, residues 1–42 (MSFSPASSEPHDAPAAAGSSVPASRSIAERWKMEAAPIRARL) are cytoplasmic. A helical membrane pass occupies residues 43 to 63 (LLRAFAWLFSLLALVVMATDV). Topologically, residues 64–76 (HGRGGAQDFSTYP) are extracellular. A helical transmembrane segment spans residues 77–97 (EYNYCLGMSIIALLYATAQLV). The Cytoplasmic segment spans residues 98–114 (RDAHRLSSGRDLVAGRK). Residues 115-135 (AAAVVDFAGDQVVAYSLISGL) form a helical membrane-spanning segment. Residues 136-156 (SAAAPVTDYMRQATDNLFNDS) are Extracellular-facing. N-linked (GlcNAc...) asparagine glycosylation is present at N154. The chain crosses the membrane as a helical span at residues 157 to 177 (AAAAISLAFFAFLAISLSALI). Residues 178-188 (SGYNLSLEAIV) are Cytoplasmic-facing.

It belongs to the Casparian strip membrane proteins (CASP) family. As to quaternary structure, homodimer and heterodimers.

Its subcellular location is the cell membrane. The polypeptide is CASP-like protein 4B3 (Hordeum vulgare subsp. vulgare (Domesticated barley)).